Consider the following 564-residue polypeptide: Hsp70-Hsp90 organising protein (564 aa).

3 TPR repeats span residues 7–40 (AQRLKELGNKCFQEGKYEEAVKYFSDAITNDPLD), 42–74 (VLYSNLSGAFASLGRFYEALESANKCISIKKDW), and 76–108 (KGYIRKGCAEHGLRQLSNAEKTYLEGLKIDPNN). A coiled-coil region spans residues 197–239 (EGNDAEERQRQQREEEERRKKKEEEERKKKEEEEMKKQNRTPE). Residues 199–247 (NDAEERQRQQREEEERRKKKEEEERKKKEEEEMKKQNRTPEQIQGDEHK) form a disordered region. The span at 201–233 (AEERQRQQREEEERRKKKEEEERKKKEEEEMKK) shows a compositional bias: basic and acidic residues. TPR repeat units follow at residues 243 to 276 (GDEHKLKGNEFYKQKKFDEALKEYEEAIQINPND), 278 to 310 (MYHYNKAAVHIEMKNYDKAVETCLYAIENRYNF), 318 to 351 (AKLYNRLAISYINMKKYDLAIEAYRKSLVEDNNR), 378 to 411 (AEEHKNKGNEYFKNNDFPNAKKEYDEAIRRNPND), 413 to 445 (KLYSNRAAALTKLIEYPSALEDVMKAIELDPTF), and 446 to 479 (VKAYSRKGNLHFFMKDYYKALQAYNKGLELDPNN). In terms of domain architecture, STI1 spans 513-552 (DPEIQQIISDPQFQIILQKLNENPNSISEYIKDPKIFNGL).

As to quaternary structure, monomer. Homodimer. Forms a complex composed of HOP and chaperones HSP70 and HSP90; the interaction is stronger in the absence of ATP. Interacts (via TPR 1, 2, 3, 7, 8 and 9 repeats) with HSP70 (via C-terminus); the interaction is direct and is stronger in the absence of ATP. Interacts (via TPR 4, 5 and 6 repeats) with HSP90 (via C-terminus); the interaction is direct.

It is found in the cytoplasm. Its function is as follows. Acts as a co-chaperone and mediates the association of the chaperones HSP70 and HSP90 probably facilitating substrate transfer from HSP70 to HSP90. Stimulates HSP70 ATPase activity and, in contrast, inhibits HSP90 ATPase activity. This is Hsp70-Hsp90 organising protein from Plasmodium falciparum (isolate 3D7).